The chain runs to 143 residues: Transcriptional regulator MraZ (143 aa).

2 SpoVT-AbrB domains span residues 5–47 (TYTP…PREE) and 76–119 (TDEQ…DAQA).

It belongs to the MraZ family. In terms of assembly, forms oligomers.

The protein localises to the cytoplasm. It is found in the nucleoid. This is Transcriptional regulator MraZ from Rhodococcus jostii (strain RHA1).